Here is a 184-residue protein sequence, read N- to C-terminus: Translocon-associated protein subunit beta (184 aa).

A signal peptide spans 1 to 20 (MNFKTVISLFLVLFVSFVYC). Topologically, residues 21–147 (ENGAELLFHK…SQADYEKRTS (127 aa)) are lumenal. N-linked (GlcNAc...) asparagine glycosylation is present at N94. A helical membrane pass occupies residues 148 to 168 (LLIKEWITFFVLCAGAIALPY). Topologically, residues 169 to 184 (SISTYYKKNYENGIKK) are cytoplasmic.

Belongs to the TRAP-beta family. As to quaternary structure, heterotrimer of TRAP-alpha, TRAP-beta and TRAP-gamma.

Its subcellular location is the endoplasmic reticulum membrane. In terms of biological role, TRAP proteins are part of a complex whose function is to bind calcium to the ER membrane and thereby regulate the retention of ER resident proteins. The sequence is that of Translocon-associated protein subunit beta (ssr2) from Dictyostelium discoideum (Social amoeba).